We begin with the raw amino-acid sequence, 158 residues long: uncharacterized protein (158 aa).

Residues 3 to 130 (YLQRVTNCVL…DGHILDFMMK (128 aa)) form the Nudix hydrolase domain. The short motif at 34–55 (GKMESGESVRDSVIREYREETG) is the Nudix box element. Mg(2+)-binding residues include Glu49 and Glu53.

It belongs to the Nudix hydrolase family. Mg(2+) serves as cofactor.

This is an uncharacterized protein from Bacillus subtilis (strain 168).